The sequence spans 306 residues: Triplex capsid protein 2 (306 aa).

The protein belongs to the herpesviridae TRX2 protein family. As to quaternary structure, interacts with TRX1 and major capisd protein/MCP.

It localises to the virion. The protein localises to the host nucleus. Functionally, structural component of the T=16 icosahedral capsid. The capsid is composed of pentamers and hexamers of major capsid protein/MCP, which are linked together by heterotrimers called triplexes. These triplexes are formed by a single molecule of triplex protein 1/TRX1 and two copies of triplex protein 2/TRX2. Additionally, TRX1 is required for efficient transport of TRX2 to the nucleus, which is the site of capsid assembly. This chain is Triplex capsid protein 2, found in Human cytomegalovirus (strain AD169) (HHV-5).